A 376-amino-acid polypeptide reads, in one-letter code: Carbamoyl phosphate synthase small chain (376 aa).

A nucleophile region spans residues 1-181; it reads MSKAVLVLED…VEPDGPPGVS (181 aa). Residues 1–183 form a CPSase region; that stretch reads MSKAVLVLED…PDGPPGVSRF (183 aa). Ser46, Gly232, Gly234, Phe261, Gln264, Asn302, Gly304, and Phe305 together coordinate L-glutamine. The region spanning 184 to 376 is the Glutamine amidotransferase type-1 domain; sequence TVAALDLGIK…FVELMAGEGR (193 aa). Catalysis depends on residues His350 and Glu352.

This sequence belongs to the CarA family. Composed of two chains; the small (or glutamine) chain promotes the hydrolysis of glutamine to ammonia, which is used by the large (or ammonia) chain to synthesize carbamoyl phosphate. Tetramer of heterodimers (alpha,beta)4.

It carries out the reaction hydrogencarbonate + L-glutamine + 2 ATP + H2O = carbamoyl phosphate + L-glutamate + 2 ADP + phosphate + 2 H(+). The enzyme catalyses L-glutamine + H2O = L-glutamate + NH4(+). Its pathway is amino-acid biosynthesis; L-arginine biosynthesis; carbamoyl phosphate from bicarbonate: step 1/1. The protein operates within pyrimidine metabolism; UMP biosynthesis via de novo pathway; (S)-dihydroorotate from bicarbonate: step 1/3. Its function is as follows. Small subunit of the glutamine-dependent carbamoyl phosphate synthetase (CPSase). CPSase catalyzes the formation of carbamoyl phosphate from the ammonia moiety of glutamine, carbonate, and phosphate donated by ATP, constituting the first step of 2 biosynthetic pathways, one leading to arginine and/or urea and the other to pyrimidine nucleotides. The small subunit (glutamine amidotransferase) binds and cleaves glutamine to supply the large subunit with the substrate ammonia. This is Carbamoyl phosphate synthase small chain from Mycobacterium tuberculosis (strain CDC 1551 / Oshkosh).